The sequence spans 389 residues: GDSL esterase/lipase At5g14450 (389 aa).

A signal peptide spans 1–30 (MKDNLERAKLMVSSTVFSWLLLCLFAVTTS). S48 functions as the Nucleophile in the catalytic mechanism. Residues N125 and N335 are each glycosylated (N-linked (GlcNAc...) asparagine). Catalysis depends on residues D354 and H357.

The protein belongs to the 'GDSL' lipolytic enzyme family.

The protein localises to the secreted. The protein is GDSL esterase/lipase At5g14450 of Arabidopsis thaliana (Mouse-ear cress).